We begin with the raw amino-acid sequence, 881 residues long: Serine/threonine-protein phosphatase BSL1 (881 aa).

3 Kelch repeats span residues G60 to T109, R269 to P320, and R338 to S385. 2 disordered regions span residues S368 to D407 and A436 to G464. Composition is skewed to polar residues over residues D374 to R383 and T445 to T460. S491 is subject to Phosphoserine. Positions V503–S522 are disordered. Residues D584, H586, D618, and N650 each coordinate Mn(2+). The active-site Proton donor is the H651. Mn(2+) is bound by residues H703 and H782. The tract at residues I837 to I881 is disordered. Position 839 is a phosphoserine (S839).

Belongs to the PPP phosphatase family. BSU subfamily. Interacts with CDG1 and CDL1. It depends on Mn(2+) as a cofactor. Expressed in mature cauline leaves and at the tip of influorescence, including flowers. Expressed at lower level in young tissues relative to older ones.

The protein resides in the nucleus. The catalysed reaction is O-phospho-L-seryl-[protein] + H2O = L-seryl-[protein] + phosphate. It carries out the reaction O-phospho-L-threonyl-[protein] + H2O = L-threonyl-[protein] + phosphate. Functionally, phosphatase involved in elongation process, probably by acting as a regulator of brassinolide signaling. The polypeptide is Serine/threonine-protein phosphatase BSL1 (BSL1) (Arabidopsis thaliana (Mouse-ear cress)).